The chain runs to 231 residues: Orotidine 5'-phosphate decarboxylase (231 aa).

Substrate contacts are provided by residues Asp-11, Lys-33, 60–69 (DLKFHDIPNT), Thr-120, Arg-181, Gln-190, Gly-210, and Arg-211. The active-site Proton donor is the Lys-62.

This sequence belongs to the OMP decarboxylase family. Type 1 subfamily. Homodimer.

It catalyses the reaction orotidine 5'-phosphate + H(+) = UMP + CO2. The protein operates within pyrimidine metabolism; UMP biosynthesis via de novo pathway; UMP from orotate: step 2/2. In terms of biological role, catalyzes the decarboxylation of orotidine 5'-monophosphate (OMP) to uridine 5'-monophosphate (UMP). The protein is Orotidine 5'-phosphate decarboxylase of Vibrio atlanticus (strain LGP32) (Vibrio splendidus (strain Mel32)).